The sequence spans 551 residues: TRAF3-interacting JNK-activating modulator (551 aa).

Residues 1-526 (MISPDPRPSP…QLPPRRQCGR (526 aa)) are Cytoplasmic-facing. Disordered regions lie at residues 73-95 (LEEKGKAQHPQAREQGPSRRPGQ) and 140-178 (DHLSSQAGGLPPQDTPIKKPPKHHRGTQTKAEGPTIKND). 2 coiled-coil regions span residues 240-436 (DKLK…LLTK) and 464-506 (WDLR…RKLQ). Residues 527–544 (WLPVLMVVIAAALAVFLA) traverse the membrane as a helical; Anchor for type IV membrane protein segment. The Extracellular portion of the chain corresponds to 545 to 551 (NKDNLMI).

As to quaternary structure, interacts (via its coiled-coil domain) with TRAF3 (via isoleucine zipper). Interacts with MAP2K1. Interacts with PPP2CA; this interaction targets PPP2CA to the lysosomes. Interacts with TLR4. Interacts with MAVS. Interacts with TBK1.

It is found in the cell membrane. The protein resides in the golgi apparatus membrane. It localises to the lysosome membrane. The protein localises to the mitochondrion outer membrane. Functionally, adapter protein that plays essential roles in both innate and adaptive immunity. Plays a crucial role in the regulation of thymocyte development. Mechanistically, mediates TCR-stimulated activation through recruiting MAP2K1/MEK1 to the Golgi and, thereby, facilitating the interaction of MAP2K1/MEK1 with its activator BRAF. Also plays an essential role in regulatory T-cell stability and function by recruiting the serine-threonine phosphatase catalytic subunit (PPP2CA) to the lysosome, thereby facilitating the interaction of PP2Ac with the mTORC1 component RPTOR and restricting glycolytic metabolism. Positively regulates TLR4 signaling activity in macrophage-mediated inflammation by acting as a molecular clamp to facilitate LPS-induced translocation of TLR4 to lipid rafts. In response to viral infection, facilitates the recruitment of TRAF3 to MAVS within mitochondria leading to IRF3 activation and interferon production. However, participates in the maintenance of immune homeostasis and the prevention of overzealous innate immunity by promoting 'Lys-48'-dependent ubiquitination of TBK1. This Homo sapiens (Human) protein is TRAF3-interacting JNK-activating modulator (TRAF3IP3).